We begin with the raw amino-acid sequence, 1102 residues long: Phosphatidylinositol 4,5-bisphosphate 3-kinase catalytic subunit gamma isoform (1102 aa).

In terms of domain architecture, PI3K-ABD spans 34-141 (SMELIPIEFV…PGQIHLVQRH (108 aa)). The 93-residue stretch at 217 to 309 (NNCIFIVIHR…GEEIHVVLDT (93 aa)) folds into the PI3K-RBD domain. The C2 PI3K-type domain occupies 357 to 521 (CDRKFRVKIR…NSMSISILLD (165 aa)). Positions 541–723 (DRVRAEMPNQ…AVILEAYLRG (183 aa)) constitute a PIK helical domain. One can recognise a PI3K/PI4K catalytic domain in the interval 797–1080 (AIEKCKVMAS…QIEVCRDKGW (284 aa)). Residues 803 to 809 (VMASKKK) form a G-loop region. ATP-binding positions include 829–838 (GIIFKHGDDL) and 864–872 (LLPYGCIST). Residues 943-951 (GIGDRHNDN) form a catalytic loop region. 961–969 (FHIDFGHIL) is a binding site for ATP. Residues 962–988 (HIDFGHILGNYKSFLGINKERVPFVLT) form an activation loop region. Position 1024 is a phosphothreonine; by PKA (Thr1024). At Ser1101 the chain carries Phosphoserine; by autocatalysis.

Belongs to the PI3/PI4-kinase family. As to quaternary structure, heterodimer of a catalytic subunit PIK3CG and a PIK3R5 or PIK3R6 regulatory subunit. Interacts with GRK2 through the PIK helical domain. Interaction with GRK2 is required for targeting to agonist-occupied receptor. Interacts with PDE3B; regulates PDE3B activity and thereby cAMP levels in cells. Interacts with TPM2. Interacts with EPHA8; regulates integrin-mediated cell adhesion to substrate. Interacts with HRAS; the interaction is required for membrane recruitment and beta-gamma G protein dimer-dependent activation of the PI3K gamma complex PIK3CG:PIK3R6. Post-translationally, autophosphorylation at Ser-1101 has no effect on the phosphatidylinositol-4,5-bisphosphate 3-kinase activity. Pancreas, skeletal muscle, liver and heart.

Its subcellular location is the cytoplasm. The protein localises to the cell membrane. The enzyme catalyses a 1,2-diacyl-sn-glycero-3-phospho-(1D-myo-inositol) + ATP = a 1,2-diacyl-sn-glycero-3-phospho-(1D-myo-inositol-3-phosphate) + ADP + H(+). The catalysed reaction is a 1,2-diacyl-sn-glycero-3-phospho-(1D-myo-inositol-4,5-bisphosphate) + ATP = a 1,2-diacyl-sn-glycero-3-phospho-(1D-myo-inositol-3,4,5-trisphosphate) + ADP + H(+). It carries out the reaction a 1,2-diacyl-sn-glycero-3-phospho-(1D-myo-inositol 4-phosphate) + ATP = a 1,2-diacyl-sn-glycero-3-phospho-(1D-myo-inositol-3,4-bisphosphate) + ADP + H(+). It catalyses the reaction L-seryl-[protein] + ATP = O-phospho-L-seryl-[protein] + ADP + H(+). It functions in the pathway phospholipid metabolism; phosphatidylinositol phosphate biosynthesis. Its activity is regulated as follows. Activated by both the alpha and the beta-gamma G proteins following stimulation of G protein-coupled receptors (GPCRs). Activation by GPCRs is assisted by the regulatory subunits (PIK3R5 or PIK3R6) leading to the translocation from the cytosol to the plasma membrane and to kinase activation. Inhibited by AS-604850 and AS-605240. In terms of biological role, phosphoinositide-3-kinase (PI3K) that phosphorylates PtdIns(4,5)P2 (Phosphatidylinositol 4,5-bisphosphate) to generate phosphatidylinositol 3,4,5-trisphosphate (PIP3). PIP3 plays a key role by recruiting PH domain-containing proteins to the membrane, including AKT1 and PDPK1, activating signaling cascades involved in cell growth, survival, proliferation, motility and morphology. Links G-protein coupled receptor activation to PIP3 production. Involved in immune, inflammatory and allergic responses. Modulates leukocyte chemotaxis to inflammatory sites and in response to chemoattractant agents. May control leukocyte polarization and migration by regulating the spatial accumulation of PIP3 and by regulating the organization of F-actin formation and integrin-based adhesion at the leading edge. Controls motility of dendritic cells. Together with PIK3CD is involved in natural killer (NK) cell development and migration towards the sites of inflammation. Participates in T-lymphocyte migration. Regulates T-lymphocyte proliferation, activation, and cytokine production. Together with PIK3CD participates in T-lymphocyte development. Required for B-lymphocyte development and signaling. Together with PIK3CD participates in neutrophil respiratory burst. Together with PIK3CD is involved in neutrophil chemotaxis and extravasation. Together with PIK3CB promotes platelet aggregation and thrombosis. Regulates alpha-IIb/beta-3 integrins (ITGA2B/ ITGB3) adhesive function in platelets downstream of P2Y12 through a lipid kinase activity-independent mechanism. May have also a lipid kinase activity-dependent function in platelet aggregation. Involved in endothelial progenitor cell migration. Negative regulator of cardiac contractility. Modulates cardiac contractility by anchoring protein kinase A (PKA) and PDE3B activation, reducing cAMP levels. Regulates cardiac contractility also by promoting beta-adrenergic receptor internalization by binding to GRK2 and by non-muscle tropomyosin phosphorylation. Also has serine/threonine protein kinase activity: both lipid and protein kinase activities are required for beta-adrenergic receptor endocytosis. May also have a scaffolding role in modulating cardiac contractility. Contributes to cardiac hypertrophy under pathological stress. Through simultaneous binding of PDE3B to RAPGEF3 and PIK3R6 is assembled in a signaling complex in which the PI3K gamma complex is activated by RAPGEF3 and which is involved in angiogenesis. In neutrophils, participates in a phospholipase C-activating N-formyl peptide-activated GPCR (G protein-coupled receptor) signaling pathway downstream of RASGRP4-mediated Ras-activation, to promote neutrophil functional responses. This Homo sapiens (Human) protein is Phosphatidylinositol 4,5-bisphosphate 3-kinase catalytic subunit gamma isoform (PIK3CG).